Reading from the N-terminus, the 247-residue chain is Ribosomal RNA large subunit methyltransferase E (247 aa).

The interval 1-21 is disordered; that stretch reads MKKTTKKTAGGYGGSGSHKLY. Positions 88, 90, 111, 127, and 151 each coordinate S-adenosyl-L-methionine. Lys191 functions as the Proton acceptor in the catalytic mechanism.

The protein belongs to the class I-like SAM-binding methyltransferase superfamily. RNA methyltransferase RlmE family.

The protein localises to the cytoplasm. It catalyses the reaction uridine(2552) in 23S rRNA + S-adenosyl-L-methionine = 2'-O-methyluridine(2552) in 23S rRNA + S-adenosyl-L-homocysteine + H(+). Its function is as follows. Specifically methylates the uridine in position 2552 of 23S rRNA at the 2'-O position of the ribose in the fully assembled 50S ribosomal subunit. The chain is Ribosomal RNA large subunit methyltransferase E from Bartonella henselae (strain ATCC 49882 / DSM 28221 / CCUG 30454 / Houston 1) (Rochalimaea henselae).